Reading from the N-terminus, the 266-residue chain is Interleukin-1 beta (266 aa).

A propeptide spanning residues 1-114 (MAAVPELSSE…DTWDEEYESD (114 aa)) is cleaved from the precursor.

The protein belongs to the IL-1 family. In terms of assembly, monomer. In its precursor form, weakly interacts with full-length MEFV; the mature cytokine does not interact at all. Interacts with integrins ITGAV:ITGBV and ITGA5:ITGB1; integrin-binding is required for IL1B signaling. Interacts with cargo receptor TMED10; the interaction is direct and is required for the secretion of IL1B mature form. Interacts with HSP90AB1; the interaction facilitates cargo translocation into the ERGIC. Interacts with HSP90B1; the interaction facilitates cargo translocation into the ERGIC.

It localises to the cytoplasm. The protein resides in the cytosol. It is found in the secreted. The protein localises to the lysosome. Its subcellular location is the extracellular exosome. In terms of biological role, potent pro-inflammatory cytokine. Initially discovered as the major endogenous pyrogen, induces prostaglandin synthesis, neutrophil influx and activation, T-cell activation and cytokine production, B-cell activation and antibody production, and fibroblast proliferation and collagen production. Promotes Th17 differentiation of T-cells. Synergizes with IL12/interleukin-12 to induce IFNG synthesis from T-helper 1 (Th1) cells. Plays a role in angiogenesis by inducing VEGF production synergistically with TNF and IL6. Involved in transduction of inflammation downstream of pyroptosis: its mature form is specifically released in the extracellular milieu by passing through the gasdermin-D (GSDMD) pore. The protein is Interleukin-1 beta (IL1B) of Cavia porcellus (Guinea pig).